Here is a 296-residue protein sequence, read N- to C-terminus: 33 kDa chaperonin (296 aa).

Cystine bridges form between Cys-238-Cys-240 and Cys-271-Cys-274.

This sequence belongs to the HSP33 family. Post-translationally, under oxidizing conditions two disulfide bonds are formed involving the reactive cysteines. Under reducing conditions zinc is bound to the reactive cysteines and the protein is inactive.

It localises to the cytoplasm. Its function is as follows. Redox regulated molecular chaperone. Protects both thermally unfolding and oxidatively damaged proteins from irreversible aggregation. Plays an important role in the bacterial defense system toward oxidative stress. The protein is 33 kDa chaperonin of Clostridium botulinum (strain Okra / Type B1).